A 607-amino-acid chain; its full sequence is Elongation factor 4 (607 aa).

One can recognise a tr-type G domain in the interval 11–193 (SKIRNFSIIA…QIVEKVPAPT (183 aa)). GTP is bound by residues 23–28 (DHGKST) and 140–143 (NKID).

The protein belongs to the TRAFAC class translation factor GTPase superfamily. Classic translation factor GTPase family. LepA subfamily.

The protein localises to the cell membrane. It catalyses the reaction GTP + H2O = GDP + phosphate + H(+). Functionally, required for accurate and efficient protein synthesis under certain stress conditions. May act as a fidelity factor of the translation reaction, by catalyzing a one-codon backward translocation of tRNAs on improperly translocated ribosomes. Back-translocation proceeds from a post-translocation (POST) complex to a pre-translocation (PRE) complex, thus giving elongation factor G a second chance to translocate the tRNAs correctly. Binds to ribosomes in a GTP-dependent manner. This is Elongation factor 4 from Bacillus mycoides (strain KBAB4) (Bacillus weihenstephanensis).